A 244-amino-acid chain; its full sequence is 1-(5-phosphoribosyl)-5-[(5-phosphoribosylamino)methylideneamino] imidazole-4-carboxamide isomerase (244 aa).

Residue aspartate 8 is the Proton acceptor of the active site. Aspartate 130 acts as the Proton donor in catalysis.

Belongs to the HisA/HisF family.

Its subcellular location is the cytoplasm. It catalyses the reaction 1-(5-phospho-beta-D-ribosyl)-5-[(5-phospho-beta-D-ribosylamino)methylideneamino]imidazole-4-carboxamide = 5-[(5-phospho-1-deoxy-D-ribulos-1-ylimino)methylamino]-1-(5-phospho-beta-D-ribosyl)imidazole-4-carboxamide. It participates in amino-acid biosynthesis; L-histidine biosynthesis; L-histidine from 5-phospho-alpha-D-ribose 1-diphosphate: step 4/9. This Hahella chejuensis (strain KCTC 2396) protein is 1-(5-phosphoribosyl)-5-[(5-phosphoribosylamino)methylideneamino] imidazole-4-carboxamide isomerase.